The following is a 104-amino-acid chain: PTS system lactose-specific EIIA component (104 aa).

Residues 4-102 (EEATLLGFEI…MKHLIELYKR (99 aa)) form the PTS EIIA type-3 domain. Histidine 78 (tele-phosphohistidine intermediate) is an active-site residue. The residue at position 78 (histidine 78) is a Phosphohistidine; by HPr. Aspartate 81 serves as a coordination point for Mg(2+).

As to quaternary structure, homotrimer. Mg(2+) is required as a cofactor.

The protein localises to the cytoplasm. The phosphoenolpyruvate-dependent sugar phosphotransferase system (sugar PTS), a major carbohydrate active transport system, catalyzes the phosphorylation of incoming sugar substrates concomitantly with their translocation across the cell membrane. The enzyme II LacEF PTS system is involved in lactose transport. The protein is PTS system lactose-specific EIIA component of Streptococcus mutans serotype c (strain ATCC 700610 / UA159).